A 166-amino-acid chain; its full sequence is UPF0561 protein C2orf68 homolog (166 aa).

A compositionally biased stretch (basic and acidic residues) spans 36–49; sequence RDDYDKKVKQAAKE. The interval 36–108 is disordered; sequence RDDYDKKVKQ…EPEPPGHQLF (73 aa).

The protein belongs to the UPF0561 family.

This Bos taurus (Bovine) protein is UPF0561 protein C2orf68 homolog.